The primary structure comprises 537 residues: Putative cysteine ligase BshC (537 aa).

Positions 422 to 450 (IEKVEGMIEQQRRLNKDLLDEVAGNQNNI) form a coiled coil.

The protein belongs to the BshC family.

Functionally, involved in bacillithiol (BSH) biosynthesis. May catalyze the last step of the pathway, the addition of cysteine to glucosamine malate (GlcN-Mal) to generate BSH. In Staphylococcus aureus (strain COL), this protein is Putative cysteine ligase BshC.